The primary structure comprises 467 residues: Zinc finger and BTB domain-containing protein 43 (467 aa).

At Met1 the chain carries N-acetylmethionine. Residues 33–97 form the BTB domain; that stretch reads CDVSIVVQGH…SYTGRLVMPA (65 aa). Disordered stretches follow at residues 134 to 153 and 162 to 225; these read LNHGSDHQSPSSSSYNGLVE and HTDF…SAEF. Basic and acidic residues-rich tracts occupy residues 164–174 and 182–194; these read DFPKAQELRDG and KDELSSQLTEHEY. Residues Lys182, Lys241, Lys247, Lys297, and Lys358 each participate in a glycyl lysine isopeptide (Lys-Gly) (interchain with G-Cter in SUMO2) cross-link. Residues 373 to 394 form a C2H2-type 1; atypical zinc finger; that stretch reads YPCQCGKSFTHKSQRDRHMSMH. The segment at 400-422 adopts a C2H2-type 2 zinc-finger fold; the sequence is YGCGVCGKKFKMKHHLVGHMKIH. Thr423 carries the phosphothreonine modification. The C2H2-type 3; atypical zinc finger occupies 428 to 450; sequence YECNICAKRFMWRDSFHRHVTSC. Residue Lys458 forms a Glycyl lysine isopeptide (Lys-Gly) (interchain with G-Cter in SUMO2) linkage.

It belongs to the krueppel C2H2-type zinc-finger protein family. In terms of assembly, interacts with BDP1.

It is found in the nucleus. Functionally, may be involved in transcriptional regulation. This is Zinc finger and BTB domain-containing protein 43 (ZBTB43) from Homo sapiens (Human).